The chain runs to 206 residues: FMN-dependent NADH:quinone oxidoreductase 1 (206 aa).

Residues Ser9, 15–17, and 139–142 contribute to the FMN site; these read SVS and SRGG.

This sequence belongs to the azoreductase type 1 family. Homodimer. The cofactor is FMN.

It catalyses the reaction 2 a quinone + NADH + H(+) = 2 a 1,4-benzosemiquinone + NAD(+). The catalysed reaction is N,N-dimethyl-1,4-phenylenediamine + anthranilate + 2 NAD(+) = 2-(4-dimethylaminophenyl)diazenylbenzoate + 2 NADH + 2 H(+). In terms of biological role, quinone reductase that provides resistance to thiol-specific stress caused by electrophilic quinones. Its function is as follows. Also exhibits azoreductase activity. Catalyzes the reductive cleavage of the azo bond in aromatic azo compounds to the corresponding amines. The chain is FMN-dependent NADH:quinone oxidoreductase 1 from Cupriavidus pinatubonensis (strain JMP 134 / LMG 1197) (Cupriavidus necator (strain JMP 134)).